The chain runs to 205 residues: Probable molybdenum cofactor guanylyltransferase (205 aa).

Residues 9–11, Lys-21, Asp-66, and Asp-95 contribute to the GTP site; that span reads LAG. Asp-95 provides a ligand contact to Mg(2+).

The protein belongs to the MobA family. Mg(2+) is required as a cofactor.

It is found in the cytoplasm. It carries out the reaction Mo-molybdopterin + GTP + H(+) = Mo-molybdopterin guanine dinucleotide + diphosphate. Functionally, transfers a GMP moiety from GTP to Mo-molybdopterin (Mo-MPT) cofactor (Moco or molybdenum cofactor) to form Mo-molybdopterin guanine dinucleotide (Mo-MGD) cofactor. The protein is Probable molybdenum cofactor guanylyltransferase of Pelotomaculum thermopropionicum (strain DSM 13744 / JCM 10971 / SI).